Reading from the N-terminus, the 427-residue chain is MEKHGDYDIKKICVIGLGYIGLPTASMLANHGYDVVGVDVNEKRVNQIKNGELKIEEPGLLTLVKGAINSKNLNVRTSATEADAFIICVPTPALAKEDGSKKCDLSYVMSAVEAILPFVKDGNLIVIESTIPPETTKKIYETLNKKIYVAHCPERVLPGKILKELVENDRIIGGINKKSAEMAKEIYKSFVEGQIYTTDSNTAEMVKLMENTYRDINIALANEFAKICDEIGVNVWDAIKIANKHPRVNILNPGPGVGGHCISIDPWFIVEKTNNAKFIRAARELNDNMPAYVCNSVLSELKKLGIEKPKISIFGATYKGNVEDTRESPSKNVIKMLLENGATVSTYDPHASYFEYPLSTLDECISGSDCIVVLTDHDVFKTIKKDDIDEICPKLKNKIVFDTKNILEHSLWKKAGFTVKLLGNGAW.

Tyr-19, Ile-20, Asp-39, Arg-44, Thr-91, and Thr-130 together coordinate NAD(+). UDP-N-acetyl-alpha-D-mannosaminouronate is bound by residues Arg-155, Val-156, Lys-207, Asn-211, Arg-214, His-245, Arg-247, and Gly-258. Lys-207 (proton donor/acceptor) is an active-site residue. The active-site Nucleophile is Cys-261. 2 residues coordinate UDP-N-acetyl-alpha-D-mannosaminouronate: Tyr-318 and Lys-319. Arg-326 provides a ligand contact to NAD(+). Position 404 (Lys-404) interacts with UDP-N-acetyl-alpha-D-mannosaminouronate.

The protein belongs to the UDP-glucose/GDP-mannose dehydrogenase family. As to quaternary structure, homotetramer; probably dimer of dimers.

It carries out the reaction UDP-N-acetyl-alpha-D-mannosamine + 2 NAD(+) + H2O = UDP-N-acetyl-alpha-D-mannosaminouronate + 2 NADH + 3 H(+). Catalyzes the four-electron oxidation of UDP-N-acetyl-D-mannosamine (UDP-ManNAc), reducing NAD(+) and releasing UDP-N-acetylmannosaminuronic acid (UDP-ManNAcA). Cannot use NADP instead of NAD. The chain is UDP-N-acetyl-D-mannosamine dehydrogenase (wecC) from Methanococcus maripaludis (strain DSM 14266 / JCM 13030 / NBRC 101832 / S2 / LL).